The chain runs to 283 residues: Polyamine aminopropyltransferase (283 aa).

Residues 5–238 form the PABS domain; the sequence is QTWIDEYHKG…GIWSWTFASS (234 aa). S-methyl-5'-thioadenosine is bound at residue glutamine 32. Histidine 63 and aspartate 87 together coordinate spermidine. Residues glutamate 107 and 139–140 each bind S-methyl-5'-thioadenosine; that span reads DG. The active-site Proton acceptor is the aspartate 158. 158–161 serves as a coordination point for spermidine; that stretch reads DCSD.

It belongs to the spermidine/spermine synthase family. In terms of assembly, homodimer or homotetramer.

The protein resides in the cytoplasm. The enzyme catalyses S-adenosyl 3-(methylsulfanyl)propylamine + putrescine = S-methyl-5'-thioadenosine + spermidine + H(+). The protein operates within amine and polyamine biosynthesis; spermidine biosynthesis; spermidine from putrescine: step 1/1. Its function is as follows. Catalyzes the irreversible transfer of a propylamine group from the amino donor S-adenosylmethioninamine (decarboxy-AdoMet) to putrescine (1,4-diaminobutane) to yield spermidine. This is Polyamine aminopropyltransferase from Prochlorococcus marinus (strain MIT 9301).